The chain runs to 440 residues: Histidinol dehydrogenase (440 aa).

Positions 139, 201, and 224 each coordinate NAD(+). Substrate contacts are provided by serine 247, glutamine 269, and histidine 272. Zn(2+) contacts are provided by glutamine 269 and histidine 272. Catalysis depends on proton acceptor residues glutamate 337 and histidine 338. 4 residues coordinate substrate: histidine 338, aspartate 371, glutamate 425, and histidine 430. Aspartate 371 serves as a coordination point for Zn(2+). Position 430 (histidine 430) interacts with Zn(2+).

This sequence belongs to the histidinol dehydrogenase family. Zn(2+) is required as a cofactor.

The catalysed reaction is L-histidinol + 2 NAD(+) + H2O = L-histidine + 2 NADH + 3 H(+). Its pathway is amino-acid biosynthesis; L-histidine biosynthesis; L-histidine from 5-phospho-alpha-D-ribose 1-diphosphate: step 9/9. Catalyzes the sequential NAD-dependent oxidations of L-histidinol to L-histidinaldehyde and then to L-histidine. The chain is Histidinol dehydrogenase from Prochlorococcus marinus (strain MIT 9312).